The chain runs to 76 residues: Spore germination protein-like protein YdzR (76 aa).

Belongs to the GerPA/GerPF family.

This is Spore germination protein-like protein YdzR (ydzR) from Bacillus subtilis (strain 168).